A 254-amino-acid chain; its full sequence is Serine acetyltransferase (254 aa).

It belongs to the transferase hexapeptide repeat family.

The protein resides in the cytoplasm. It carries out the reaction L-serine + acetyl-CoA = O-acetyl-L-serine + CoA. The protein operates within amino-acid biosynthesis; L-cysteine biosynthesis; L-cysteine from L-serine: step 1/2. This Buchnera aphidicola subsp. Baizongia pistaciae (strain Bp) protein is Serine acetyltransferase (cysE).